We begin with the raw amino-acid sequence, 346 residues long: Biotin synthase (346 aa).

Positions 38 to 256 constitute a Radical SAM core domain; the sequence is RQVQVSTLLS…IAVARIMMPT (219 aa). Cys-53, Cys-57, and Cys-60 together coordinate [4Fe-4S] cluster. 4 residues coordinate [2Fe-2S] cluster: Cys-97, Cys-128, Cys-188, and Arg-260.

This sequence belongs to the radical SAM superfamily. Biotin synthase family. As to quaternary structure, homodimer. [4Fe-4S] cluster is required as a cofactor. It depends on [2Fe-2S] cluster as a cofactor.

The enzyme catalyses (4R,5S)-dethiobiotin + (sulfur carrier)-SH + 2 reduced [2Fe-2S]-[ferredoxin] + 2 S-adenosyl-L-methionine = (sulfur carrier)-H + biotin + 2 5'-deoxyadenosine + 2 L-methionine + 2 oxidized [2Fe-2S]-[ferredoxin]. The protein operates within cofactor biosynthesis; biotin biosynthesis; biotin from 7,8-diaminononanoate: step 2/2. Its function is as follows. Catalyzes the conversion of dethiobiotin (DTB) to biotin by the insertion of a sulfur atom into dethiobiotin via a radical-based mechanism. This Escherichia coli (strain K12 / DH10B) protein is Biotin synthase.